Reading from the N-terminus, the 423-residue chain is tRNA(Ile)-lysidine synthase (423 aa).

ATP is bound at residue 27–32 (SGGVDS).

This sequence belongs to the tRNA(Ile)-lysidine synthase family.

It is found in the cytoplasm. It carries out the reaction cytidine(34) in tRNA(Ile2) + L-lysine + ATP = lysidine(34) in tRNA(Ile2) + AMP + diphosphate + H(+). Functionally, ligates lysine onto the cytidine present at position 34 of the AUA codon-specific tRNA(Ile) that contains the anticodon CAU, in an ATP-dependent manner. Cytidine is converted to lysidine, thus changing the amino acid specificity of the tRNA from methionine to isoleucine. The protein is tRNA(Ile)-lysidine synthase of Streptococcus mutans serotype c (strain ATCC 700610 / UA159).